A 596-amino-acid chain; its full sequence is Aspartate--tRNA(Asp/Asn) ligase (596 aa).

Glu169 is a binding site for L-aspartate. An aspartate region spans residues 193 to 196; sequence QLFK. Arg215 is a binding site for L-aspartate. Residues 215-217 and Gln224 contribute to the ATP site; that span reads RDE. Residue His447 participates in L-aspartate binding. Glu481 serves as a coordination point for ATP. An L-aspartate-binding site is contributed by Arg488. 533 to 536 lines the ATP pocket; it reads GWDR. The interval 559-596 is disordered; the sequence is GYDPLTQAPAPITAQQRKEAGVDFKPEAKKADPGATKA. Residues 574–590 show a composition bias toward basic and acidic residues; the sequence is QRKEAGVDFKPEAKKAD.

The protein belongs to the class-II aminoacyl-tRNA synthetase family. Type 1 subfamily. Homodimer.

It localises to the cytoplasm. The enzyme catalyses tRNA(Asx) + L-aspartate + ATP = L-aspartyl-tRNA(Asx) + AMP + diphosphate. Functionally, aspartyl-tRNA synthetase with relaxed tRNA specificity since it is able to aspartylate not only its cognate tRNA(Asp) but also tRNA(Asn). Reaction proceeds in two steps: L-aspartate is first activated by ATP to form Asp-AMP and then transferred to the acceptor end of tRNA(Asp/Asn). This chain is Aspartate--tRNA(Asp/Asn) ligase, found in Arthrobacter sp. (strain FB24).